The following is a 286-amino-acid chain: Homoserine kinase (286 aa).

An ATP-binding site is contributed by 78–88; that stretch reads PLARGLGSSSS.

This sequence belongs to the GHMP kinase family. Homoserine kinase subfamily.

The protein localises to the cytoplasm. The enzyme catalyses L-homoserine + ATP = O-phospho-L-homoserine + ADP + H(+). The protein operates within amino-acid biosynthesis; L-threonine biosynthesis; L-threonine from L-aspartate: step 4/5. Its function is as follows. Catalyzes the ATP-dependent phosphorylation of L-homoserine to L-homoserine phosphate. This chain is Homoserine kinase, found in Streptococcus thermophilus (strain CNRZ 1066).